Reading from the N-terminus, the 464-residue chain is AAC-rich mRNA clone AAC11 protein (464 aa).

The segment covering 1-15 (MSTPTLPNLSQLHGI) has biased composition (polar residues). Disordered stretches follow at residues 1 to 112 (MSTP…HGTN) and 125 to 464 (SLPQ…SFFH). Composition is skewed to low complexity over residues 16–65 (QNQS…QQPQ), 78–88 (NPNGLGLMGHN), and 130–160 (INNN…NNSN). Positions 161 to 174 (LGINSSPTQSSANS) are enriched in polar residues. 3 consecutive DNA-binding regions (a.T hook) follow at residues 177–189 (KRSR…NPPS), 198–210 (KRKR…MDEE), and 224–236 (NKKR…PKDE). Residues 240–253 (DYNNTSFSDSNTDG) show a composition bias toward polar residues. Positions 255-267 (PKKRGRPPKAKGD) form a DNA-binding region, a.T hook 4. The span at 276-428 (NTLGNGILNS…NNAGNLGNLG (153 aa)) shows a compositional bias: low complexity. Residues 433–464 (LHSSDPNNPNAQKSFPDSTNTMDFQPNFSFFH) show a composition bias toward polar residues.

The chain is AAC-rich mRNA clone AAC11 protein (AAC11) from Dictyostelium discoideum (Social amoeba).